Here is an 86-residue protein sequence, read N- to C-terminus: Ferredoxin YfhL (86 aa).

4Fe-4S ferredoxin-type domains are found at residues 1 to 29 (MALL…MGDH) and 31 to 65 (YEIN…KDPA). [4Fe-4S] cluster contacts are provided by Cys-9, Cys-12, Cys-15, Cys-19, Cys-38, Cys-41, Cys-50, and Cys-54.

[4Fe-4S] cluster is required as a cofactor.

Its function is as follows. Ferredoxins are iron-sulfur proteins that transfer electrons in a wide variety of metabolic reactions. The polypeptide is Ferredoxin YfhL (yfhL) (Escherichia coli (strain K12)).